We begin with the raw amino-acid sequence, 268 residues long: Tryptophan synthase alpha chain (268 aa).

Catalysis depends on proton acceptor residues Glu-49 and Asp-60.

It belongs to the TrpA family. Tetramer of two alpha and two beta chains.

The catalysed reaction is (1S,2R)-1-C-(indol-3-yl)glycerol 3-phosphate + L-serine = D-glyceraldehyde 3-phosphate + L-tryptophan + H2O. It functions in the pathway amino-acid biosynthesis; L-tryptophan biosynthesis; L-tryptophan from chorismate: step 5/5. Its function is as follows. The alpha subunit is responsible for the aldol cleavage of indoleglycerol phosphate to indole and glyceraldehyde 3-phosphate. The sequence is that of Tryptophan synthase alpha chain from Xanthomonas oryzae pv. oryzae (strain MAFF 311018).